The following is a 60-amino-acid chain: MAVPKFKPSKSRSRTRRSINMRKKIPQFQECSNCGNLVVRHRICLKCGYYRNNQYLEISL.

Belongs to the bacterial ribosomal protein bL32 family.

This chain is Large ribosomal subunit protein bL32, found in Borreliella afzelii (strain PKo) (Borrelia afzelii).